We begin with the raw amino-acid sequence, 251 residues long: Triosephosphate isomerase (251 aa).

9-11 (NWK) contacts substrate. The Electrophile role is filled by histidine 95. The active-site Proton acceptor is the glutamate 167. Substrate contacts are provided by residues glycine 173, serine 213, and 234–235 (GG).

The protein belongs to the triosephosphate isomerase family. As to quaternary structure, homodimer.

It localises to the cytoplasm. It carries out the reaction D-glyceraldehyde 3-phosphate = dihydroxyacetone phosphate. Its pathway is carbohydrate biosynthesis; gluconeogenesis. It participates in carbohydrate degradation; glycolysis; D-glyceraldehyde 3-phosphate from glycerone phosphate: step 1/1. Its function is as follows. Involved in the gluconeogenesis. Catalyzes stereospecifically the conversion of dihydroxyacetone phosphate (DHAP) to D-glyceraldehyde-3-phosphate (G3P). The sequence is that of Triosephosphate isomerase from Geobacter metallireducens (strain ATCC 53774 / DSM 7210 / GS-15).